A 186-amino-acid polypeptide reads, in one-letter code: Methyl-CpG-binding domain-containing protein 4 (186 aa).

A CW-type zinc finger spans residues 22–77 (GRLIDTYAAQCDNCHKWRVIDSQEEYEDIRSKMLEDPFNCQKKQGMSCEEPADIDY). The MBD-associated domain (MAD) motif lies at 31 to 69 (QCDNCHKWRVIDSQEEYEDIRSKMLEDPFNCQKKQGMSC). Residues cysteine 32, cysteine 35, cysteine 61, and cysteine 69 each coordinate Zn(2+). Positions 83 to 153 (WVIDKPGLPK…GDFNFTVPKV (71 aa)) constitute an MBD domain. Positions 154–186 (MEDTVPPDPKLGSPFPSTTTTTSEKSSVKQSHN) are disordered. Over residues 166–178 (SPFPSTTTTTSEK) the composition is skewed to low complexity.

Expressed in rosette leaves, buds, flowers, stems, mature seeds and roots.

The protein resides in the nucleus. Functionally, transcriptional regulator that binds CpG, CpNpN and CpNpG (N is A, T, or C) islands in promoters regardless the DNA methylation status. Plays probably a role in gene silencing. The polypeptide is Methyl-CpG-binding domain-containing protein 4 (MBD4) (Arabidopsis thaliana (Mouse-ear cress)).